The following is a 234-amino-acid chain: Proteasome subunit alpha type-2 (234 aa).

An N-acetylalanine modification is found at Ala-2. Tyr-121 carries the phosphotyrosine modification.

This sequence belongs to the peptidase T1A family. In terms of assembly, the 26S proteasome consists of a 20S proteasome core and two 19S regulatory subunits. The 20S proteasome core is composed of 28 subunits that are arranged in four stacked rings, resulting in a barrel-shaped structure. The two end rings are each formed by seven alpha subunits, and the two central rings are each formed by seven beta subunits. The catalytic chamber with the active sites is on the inside of the barrel.

The protein localises to the cytoplasm. The protein resides in the nucleus. The proteasome is a multicatalytic proteinase complex which is characterized by its ability to cleave peptides with Arg, Phe, Tyr, Leu, and Glu adjacent to the leaving group at neutral or slightly basic pH. The proteasome has an ATP-dependent proteolytic activity. PSMA2 may have a potential regulatory effect on another component(s) of the proteasome complex through tyrosine phosphorylation. The protein is Proteasome subunit alpha type-2 (psma2) of Carassius auratus (Goldfish).